A 125-amino-acid polypeptide reads, in one-letter code: Large ribosomal subunit protein bL21 (125 aa).

This sequence belongs to the bacterial ribosomal protein bL21 family. As to quaternary structure, part of the 50S ribosomal subunit. Contacts protein L20.

Functionally, this protein binds to 23S rRNA in the presence of protein L20. The sequence is that of Large ribosomal subunit protein bL21 from Synechococcus sp. (strain CC9311).